Reading from the N-terminus, the 225-residue chain is Interleukin-6 (225 aa).

The signal sequence occupies residues 1–24 (MPSRLNVFWLCAAALAALLRCAPA). A glycan (N-linked (GlcNAc...) asparagine) is linked at N98.

The protein belongs to the IL-6 superfamily. In terms of assembly, component of a hexamer of two molecules each of IL6, IL6R and IL6ST; first binds to IL6R to associate with the signaling subunit IL6ST. As to expression, expressed in white muscle, skin, spleen, anterior intestine and stomach. Not expressed in brain, gill, head kidney, posterior intestine and adipose tissue.

It localises to the secreted. Its function is as follows. Cytokine with a wide variety of biological functions in immunity, tissue regeneration, and metabolism. Binds to IL6R, then the complex associates to the signaling subunit IL6ST/gp130 to trigger the intracellular IL6-signaling pathway. The interaction with the membrane-bound IL6R and IL6ST stimulates 'classic signaling', whereas the binding of IL6 and soluble IL6R to IL6ST stimulates 'trans-signaling'. Alternatively, 'cluster signaling' occurs when membrane-bound IL6:IL6R complexes on transmitter cells activate IL6ST receptors on neighboring receiver cells. The chain is Interleukin-6 (il6) from Sparus aurata (Gilthead sea bream).